Reading from the N-terminus, the 295-residue chain is Pyridoxal 5'-phosphate synthase subunit PdxS (295 aa).

D-ribose 5-phosphate is bound at residue Asp25. Lys82 serves as the catalytic Schiff-base intermediate with D-ribose 5-phosphate. D-ribose 5-phosphate is bound at residue Gly154. D-glyceraldehyde 3-phosphate is bound at residue Arg166. Residues Gly215 and 236 to 237 each bind D-ribose 5-phosphate; that span reads GS.

It belongs to the PdxS/SNZ family. As to quaternary structure, in the presence of PdxT, forms a dodecamer of heterodimers.

The catalysed reaction is aldehydo-D-ribose 5-phosphate + D-glyceraldehyde 3-phosphate + L-glutamine = pyridoxal 5'-phosphate + L-glutamate + phosphate + 3 H2O + H(+). It functions in the pathway cofactor biosynthesis; pyridoxal 5'-phosphate biosynthesis. Functionally, catalyzes the formation of pyridoxal 5'-phosphate from ribose 5-phosphate (RBP), glyceraldehyde 3-phosphate (G3P) and ammonia. The ammonia is provided by the PdxT subunit. Can also use ribulose 5-phosphate and dihydroxyacetone phosphate as substrates, resulting from enzyme-catalyzed isomerization of RBP and G3P, respectively. The sequence is that of Pyridoxal 5'-phosphate synthase subunit PdxS from Bacillus anthracis (strain A0248).